Here is a 376-residue protein sequence, read N- to C-terminus: ORC1-type DNA replication protein 2 (376 aa).

ATP contacts are provided by residues 73–77 (TGKTS), Tyr209, and Arg221.

It belongs to the CDC6/cdc18 family.

Its function is as follows. Involved in regulation of DNA replication. The chain is ORC1-type DNA replication protein 2 (cdc6-2) from Archaeoglobus fulgidus (strain ATCC 49558 / DSM 4304 / JCM 9628 / NBRC 100126 / VC-16).